Consider the following 232-residue polypeptide: MDLPIQDSHDSSTSPKGKQPTTAEKSATKKEDKVPVKKQKTRTVFSSTQLCVLNDRFQRQKYLSLQQMQELSNILNLSYKQVKTWFQNQRMKSKRWQKNNWLKNSNGVTQGCLVNPTGNLPMWSNQTWNNSTWSNQTQNIQSWSNHSWNTQTWCTQSWNNQAWNSPFYNCGEESLQSCMQFQPNSPASDLEAALEAAGEGLNVIQQTARYFSTPQTMDLFLNYSTNMXXEDV.

Residues 1 to 39 are disordered; sequence MDLPIQDSHDSSTSPKGKQPTTAEKSATKKEDKVPVKKQ. Residues 11-25 show a composition bias toward polar residues; sequence SSTSPKGKQPTTAEK. The segment covering 26-35 has biased composition (basic and acidic residues); that stretch reads SATKKEDKVP. Repeat copies occupy residues 123–127, 128–132, 133–137, 143–147, 148–152, 153–157, 158–162, and 163–167. Residues 123-167 are 8 X repeats starting with a Trp in each unit; sequence WSNQTWNNSTWSNQTQNIQSWSNHSWNTQTWCTQSWNNQAWNSPF. Residues 123–167 form a sufficient for transactivation activity region; the sequence is WSNQTWNNSTWSNQTQNIQSWSNHSWNTQTWCTQSWNNQAWNSPF. Residues 168–232 form a sufficient for strong transactivation activity region; sequence YNCGEESLQS…YSTNMXXEDV (65 aa).

This sequence belongs to the Nanog homeobox family.

It localises to the nucleus. Functionally, probable transcriptional regulator. The sequence is that of Putative homeobox protein NANOG2 (NANOGP1) from Pan paniscus (Pygmy chimpanzee).